A 291-amino-acid chain; its full sequence is Probable peptide ABC transporter permease protein y4tQ (291 aa).

The next 5 helical transmembrane spans lie at 28 to 48, 92 to 112, 137 to 157, 213 to 233, and 249 to 269; these read LVLLGGGILLLLILLALAAPL, LIVGLLSAVCAAVCGLLIGVI, LLAIALLSLTGPGIGILIVAI, ATVCASAIMTEAGLSFIGVGV, and LFLAIAPLTIFAPGLCLAVTV. The ABC transmembrane type-1 domain occupies 88 to 276; the sequence is ARISLIVGLL…VTVLAVNLLG (189 aa).

Belongs to the binding-protein-dependent transport system permease family. OppBC subfamily.

It localises to the cell inner membrane. Its function is as follows. Probably part of the binding-protein-dependent transport system y4tOPQRS for a peptide. Probably responsible for the translocation of the substrate across the membrane. In Sinorhizobium fredii (strain NBRC 101917 / NGR234), this protein is Probable peptide ABC transporter permease protein y4tQ.